The chain runs to 192 residues: Shikimate kinase (192 aa).

26–31 (ASGKSS) lines the ATP pocket. Position 30 (serine 30) interacts with Mg(2+). Positions 48, 72, and 94 each coordinate substrate. Arginine 132 is a binding site for ATP. Residue arginine 151 participates in substrate binding.

Belongs to the shikimate kinase family. As to quaternary structure, monomer. Mg(2+) serves as cofactor.

It is found in the cytoplasm. The catalysed reaction is shikimate + ATP = 3-phosphoshikimate + ADP + H(+). It functions in the pathway metabolic intermediate biosynthesis; chorismate biosynthesis; chorismate from D-erythrose 4-phosphate and phosphoenolpyruvate: step 5/7. Functionally, catalyzes the specific phosphorylation of the 3-hydroxyl group of shikimic acid using ATP as a cosubstrate. This Prochlorococcus marinus (strain MIT 9313) protein is Shikimate kinase.